The following is a 503-amino-acid chain: Aspartyl/glutamyl-tRNA(Asn/Gln) amidotransferase subunit B (503 aa).

It belongs to the GatB/GatE family. GatB subfamily. In terms of assembly, heterotrimer of A, B and C subunits.

It catalyses the reaction L-glutamyl-tRNA(Gln) + L-glutamine + ATP + H2O = L-glutaminyl-tRNA(Gln) + L-glutamate + ADP + phosphate + H(+). The enzyme catalyses L-aspartyl-tRNA(Asn) + L-glutamine + ATP + H2O = L-asparaginyl-tRNA(Asn) + L-glutamate + ADP + phosphate + 2 H(+). In terms of biological role, allows the formation of correctly charged Asn-tRNA(Asn) or Gln-tRNA(Gln) through the transamidation of misacylated Asp-tRNA(Asn) or Glu-tRNA(Gln) in organisms which lack either or both of asparaginyl-tRNA or glutaminyl-tRNA synthetases. The reaction takes place in the presence of glutamine and ATP through an activated phospho-Asp-tRNA(Asn) or phospho-Glu-tRNA(Gln). The chain is Aspartyl/glutamyl-tRNA(Asn/Gln) amidotransferase subunit B from Cereibacter sphaeroides (strain ATCC 17023 / DSM 158 / JCM 6121 / CCUG 31486 / LMG 2827 / NBRC 12203 / NCIMB 8253 / ATH 2.4.1.) (Rhodobacter sphaeroides).